A 721-amino-acid polypeptide reads, in one-letter code: Vacuolar transporter chaperone complex subunit 4 (721 aa).

Positions 1–146 (MKFGQLLKET…GWILKPVFAA (146 aa)) constitute an SPX domain. Over 1–631 (MKFGQLLKET…KTYFALERTY (631 aa)) the chain is Cytoplasmic. Residues lysine 198, arginine 262, arginine 264, lysine 279, lysine 292, tyrosine 357, and arginine 359 each contribute to the ATP site. Glutamate 421 contributes to the Mn(2+) binding site. Residue lysine 453 is part of the active site. Polar residues-rich tracts occupy residues 490 to 513 (QGRS…SENT) and 529 to 547 (IGSS…SDSF). The tract at residues 490–547 (QGRSQSGTHSSSVSANVLTDSENTPIHADGDNYVDEESRIGSSSTRNDNSTFQTSDSF) is disordered. Position 495 is a phosphoserine (serine 495). At threonine 497 the chain carries Phosphothreonine. A Phosphoserine modification is found at serine 501. A Phosphothreonine modification is found at threonine 534. Serine 546 bears the Phosphoserine mark. The chain crosses the membrane as a helical span at residues 632-652 (LDYLRYSILMGSIGITLFSFA). The Vacuolar segment spans residues 653-657 (KTRSG). The chain crosses the membrane as a helical span at residues 658 to 678 (ILGAASFTLVALFAIFYSTFL). Residues 679–697 (YLWRAVNIAKHNAVRYDDR) lie on the Cytoplasmic side of the membrane. A helical membrane pass occupies residues 698-718 (FGPTAICVITFAAISANVILN). Over 719 to 721 (FNA) the chain is Vacuolar.

Belongs to the VTC4 family. As to quaternary structure, the VTC core complex is an integral membrane heterooligomer composed of at least the catalytic subunit vtc4 and the accessory subunits vtc1 and vtc2. vtc1 is a small membrane protein without hydrophilic domain. Vtc2 and vtc4 are related and have 2 hydrophilic domains that face the cytosol, an N-terminal SPX domain and the central core domain. The central core in vtc4 is the catalytic domain. Mn(2+) serves as cofactor.

Its subcellular location is the vacuole membrane. It catalyses the reaction [phosphate](n) + ATP = [phosphate](n+1) + ADP. Activity of the enzyme is Mn(2+)-dependent and enhanced in the presence of pyrophosphate (PPi). Functionally, catalytic subunit of the vacuolar transporter chaperone (VTC) complex. The VTC complex acts as a vacuolar polyphosphate polymerase that catalyzes the synthesis of inorganic polyphosphate (polyP) via transfer of phosphate from ATP to a growing polyP chain, releasing ADP. VTC exposes its catalytic domain vtc4 to the cytosol, where the growing polyP chain winds through a tunnel-shaped pocket, integrating cytoplasmic polymer synthesis with polyP membrane translocation. The VTC complex carries 9 vacuolar transmembrane domains, which are likely to constitute the translocation channel into the organelle lumen. PolyP synthesis is tightly coupled to its transport into the vacuole lumen, in order to avoid otherwise toxic intermediates in the cytosol, and it depends on the proton gradient across the membrane, formed by V-ATPase. The VTC complex also plays a role in vacuolar membrane fusion. This chain is Vacuolar transporter chaperone complex subunit 4 (vtc4), found in Schizosaccharomyces pombe (strain 972 / ATCC 24843) (Fission yeast).